The chain runs to 180 residues: 6,7-dimethyl-8-ribityllumazine synthase (180 aa).

Residues Phe23, 61-63 (SFE), and 85-87 (AVI) contribute to the 5-amino-6-(D-ribitylamino)uracil site. 90–91 (QT) contacts (2S)-2-hydroxy-3-oxobutyl phosphate. The Proton donor role is filled by His93. Residue Phe118 coordinates 5-amino-6-(D-ribitylamino)uracil. (2S)-2-hydroxy-3-oxobutyl phosphate is bound at residue Arg132.

The protein belongs to the DMRL synthase family.

It carries out the reaction (2S)-2-hydroxy-3-oxobutyl phosphate + 5-amino-6-(D-ribitylamino)uracil = 6,7-dimethyl-8-(1-D-ribityl)lumazine + phosphate + 2 H2O + H(+). The protein operates within cofactor biosynthesis; riboflavin biosynthesis; riboflavin from 2-hydroxy-3-oxobutyl phosphate and 5-amino-6-(D-ribitylamino)uracil: step 1/2. Its function is as follows. Catalyzes the formation of 6,7-dimethyl-8-ribityllumazine by condensation of 5-amino-6-(D-ribitylamino)uracil with 3,4-dihydroxy-2-butanone 4-phosphate. This is the penultimate step in the biosynthesis of riboflavin. This chain is 6,7-dimethyl-8-ribityllumazine synthase, found in Gloeobacter violaceus (strain ATCC 29082 / PCC 7421).